Reading from the N-terminus, the 436-residue chain is Trigger factor (436 aa).

In terms of domain architecture, PPIase FKBP-type spans 163–248; that stretch reads GDQVIIDFVG…VHSVQTKVLP (86 aa).

Belongs to the FKBP-type PPIase family. Tig subfamily.

It is found in the cytoplasm. The enzyme catalyses [protein]-peptidylproline (omega=180) = [protein]-peptidylproline (omega=0). Functionally, involved in protein export. Acts as a chaperone by maintaining the newly synthesized protein in an open conformation. Functions as a peptidyl-prolyl cis-trans isomerase. This chain is Trigger factor, found in Hydrogenovibrio crunogenus (strain DSM 25203 / XCL-2) (Thiomicrospira crunogena).